A 442-amino-acid polypeptide reads, in one-letter code: MKAEGLSGGYGDSRLINNVSLTVEKGEFLGILGPNGSGKTTLLHLLTGTLPAKKGRVYLAGKLLADYKPKELAQIMAVLPQKMDQAFTFTVEETVAFGRYPFQTGLFRQQTEKGEAIVQEAMEQTGVADFAQKPIRELSGGEQQRVYLAQALAQQPRILFLDEPTNFLDLAYQKDLLDLIKRLTRESGLAAVSVFHDLNTASLYCDGLMFMKNGTAGPKQKPEYAVTEQSIKAVYDTDVTALVHQSSPKPMIVIQPEKDSVKRQSIPFEALLQAGRDDILLQTEIPLRTLSSTPIGAGFSWSRTLIHKRLPDQPDPIEGLTACLSESGFQLQETCAMASSERLDRFVYRTYEDGELSVFICVQTGFSIWILINGYAADQFFIKALMAAEAERTKVLGDGGGTGDILIAATQTQQSENIEQRLNQLIKKGTAECIKEAAELFE.

Residues 1-238 (MKAEGLSGGY…QSIKAVYDTD (238 aa)) enclose the ABC transporter domain. An ATP-binding site is contributed by 33–40 (GPNGSGKT).

The protein belongs to the ABC transporter superfamily. The complex is composed of two ATP-binding proteins (YvrA), two transmembrane proteins (YvrB) and a solute-binding protein (YvrC).

Functionally, probably part of an ABC transporter complex. Probably responsible for energy coupling to the transport system. This is an uncharacterized protein from Bacillus subtilis (strain 168).